A 496-amino-acid polypeptide reads, in one-letter code: NADP-dependent glyceraldehyde-3-phosphate dehydrogenase (496 aa).

Substrate contacts are provided by residues R116 and 169-170; that span reads NY. Residues K192, T195, and D230 each coordinate NADP(+). 245–249 lines the NAD(+) pocket; that stretch reads GGDTG. The active-site Proton acceptor is the E264. Substrate is bound at residue 297-299; sequence RCT. Residue C298 is the Nucleophile of the active site. E391 contributes to the NADP(+) binding site. R451 is a binding site for substrate.

Belongs to the aldehyde dehydrogenase family.

Its subcellular location is the cytoplasm. The enzyme catalyses D-glyceraldehyde 3-phosphate + NADP(+) + H2O = (2R)-3-phosphoglycerate + NADPH + 2 H(+). Important as a means of generating NADPH for biosynthetic reactions. The polypeptide is NADP-dependent glyceraldehyde-3-phosphate dehydrogenase (GAPN) (Pisum sativum (Garden pea)).